A 143-amino-acid chain; its full sequence is Phosphatidylethanolamine-binding protein homolog R644 (143 aa).

It belongs to the phosphatidylethanolamine-binding protein family.

The protein localises to the virion. The chain is Phosphatidylethanolamine-binding protein homolog R644 from Acanthamoeba polyphaga mimivirus (APMV).